Consider the following 482-residue polypeptide: ATP-dependent rRNA helicase rrp3 (482 aa).

Positions 1–55 are disordered; it reads MSSVKRRKTEKNTSSGLKSKQAKEPKEASPLSSPEPTEENQNNEIEEGTEEEEVT. The segment covering 44 to 53 has biased composition (acidic residues); that stretch reads EIEEGTEEEE. The Q motif motif lies at 56–84; the sequence is KSFKDLGIVDSLCEACDTLGYKAPTPIQR. The Helicase ATP-binding domain occupies 87–258; that stretch reads IPLALQGRDL…RASLKDPLRV (172 aa). 100–107 contributes to the ATP binding site; it reads AETGSGKT. The DEAD box motif lies at 206–209; the sequence is DEAD. Positions 282–430 constitute a Helicase C-terminal domain; sequence HKDTYLIYLL…EYQTVKDEVM (149 aa). 2 stretches are compositionally biased toward basic and acidic residues: residues 444 to 456 and 472 to 482; these read RNEMKNLHEDRGK and RGRDEMDREEG. The tract at residues 444 to 482 is disordered; the sequence is RNEMKNLHEDRGKKGAVLKGRRPANGAKRGRDEMDREEG.

Belongs to the DEAD box helicase family. DDX47/RRP3 subfamily. Interacts with the SSU processome.

The protein localises to the nucleus. The enzyme catalyses ATP + H2O = ADP + phosphate + H(+). In terms of biological role, ATP-dependent rRNA helicase required for pre-ribosomal RNA processing. Involved in the maturation of the 35S-pre-rRNA and to its cleavage to mature 18S rRNA. In Sclerotinia sclerotiorum (strain ATCC 18683 / 1980 / Ss-1) (White mold), this protein is ATP-dependent rRNA helicase rrp3.